Consider the following 128-residue polypeptide: MFYSIVAIFVGAGLGALLRWFLSIGLNALLPEVPLGTLVSNLIGGYLIGIAVVAFATRAGLPPEWRLFVITGFMGGLTTFSTYSVEVMTHATQGEFGWALAVAALHLIGSFTLTGLGMWTARAWLAPA.

4 helical membrane passes run 5–25, 35–55, 67–87, and 96–116; these read IVAIFVGAGLGALLRWFLSIG, LGTLVSNLIGGYLIGIAVVAF, LFVITGFMGGLTTFSTYSVEV, and FGWALAVAALHLIGSFTLTGL. Residues Gly-75 and Thr-78 each coordinate Na(+).

The protein belongs to the fluoride channel Fluc/FEX (TC 1.A.43) family.

It localises to the cell inner membrane. The catalysed reaction is fluoride(in) = fluoride(out). With respect to regulation, na(+) is not transported, but it plays an essential structural role and its presence is essential for fluoride channel function. In terms of biological role, fluoride-specific ion channel. Important for reducing fluoride concentration in the cell, thus reducing its toxicity. In Burkholderia thailandensis (strain ATCC 700388 / DSM 13276 / CCUG 48851 / CIP 106301 / E264), this protein is Fluoride-specific ion channel FluC.